Consider the following 486-residue polypeptide: Arrestin-related trafficking adapter 10 (486 aa).

It belongs to the ART10 family.

The protein resides in the cytoplasm. May regulate endocytosis by recruiting RSP5 ubiquitin ligase activity to specific plasma membrane proteins in response to extracellular stimuli. The protein is Arrestin-related trafficking adapter 10 (ART10) of Zygosaccharomyces rouxii (strain ATCC 2623 / CBS 732 / NBRC 1130 / NCYC 568 / NRRL Y-229).